Consider the following 421-residue polypeptide: F-box only protein 5 (421 aa).

A Phosphoserine modification is found at serine 85. The interaction with EVI5 stretch occupies residues 114-219 (ELEASRLYED…IGKKMGLEHL (106 aa)). The F-box domain occupies 223 to 273 (AELSRRGFVHLLANILTKLSGMDLVNLSKVSRIWKKILENNKGAFQLYSKT). The sufficient for interaction with RPS6KA2; Prevents association of CDC20 with RPS6KA2 stretch occupies residues 236 to 313 (NILTKLSGMD…KSSTWAPPKK (78 aa)). The tract at residues 236–383 (NILTKLSGMD…SCQFEYCTKC (148 aa)) is requires for efficient binding to CDC20. The inhibits APC ubiquitin ligase activity stretch occupies residues 280-421 (SSKLSLHATT…KKSKKNLQRL (142 aa)). The tract at residues 296–299 (RAAL) is competitively blocks access of APC substrates to the D-box coreceptor formed by FZR1 and ANAPC10. The segment at 348-396 (SLKACVRCNFPAKYDHYLERAVCKRESCQFEYCTKCLCAYHNNKDCLNG) adopts a ZBR-type zinc-finger fold. Residues cysteine 352, cysteine 355, cysteine 370, cysteine 375, cysteine 380, cysteine 383, histidine 388, and cysteine 393 each contribute to the Zn(2+) site. An allows a rapid multiple mono-ubiquitination of the APC substrate, but strongly inhibits the slow ubiquitin chain elongation catalyzed by UBCH10 region spans residues 352–394 (CVRCNFPAKYDHYLERAVCKRESCQFEYCTKCLCAYHNNKDCL). The interval 411-421 (TKKSKKNLQRL) is sufficient to suppress UBE2S activity; essential for interaction with UBE2S; competitively inhibits the rapide ubiquitin chain elongation by UBE2D1 which blocks UBE2D1 with APC; indispensable for recruitment and position of FBXO5 to the catalytic site of APC; abrogates the inhibition of ubiquitin chain assembly primarily catalyzed by UBE2S; inhibits the ubiquitination by either UBE2C or UBE2D1.

As to quaternary structure, part of a SCF (SKP1-cullin-F-box) protein ligase complex. Interacts with BTRC; mediates proteolysis by the SCF ubiquitin ligase complex leading to activation of APC in late mitosis and subsequent mitotic progression. Interacts with FZR1/CDH1 and the N-terminal substrate-binding domain of CDC20; prevents APC activation. Also interacts with EVI5 which blocks its phosphorylation by PLK1 and prevents its subsequent binding to BTRC and degradation. Interacts simultaneously with anaphase promoting complex (APC), through at least ANAPC2, CDC23, CDC27, the APC substrate GMNN and the APC activator FZR1. Interacts with UBE2S; interferes with the activity of UBE2S mainly by disrupting the dynamic electrostatic association between the C-terminal tail of UBE2S and ANAPC2. Interacts with RPS6KA2; cooperates to induce the metaphase arrest of early blastomeres; increases and stabilizes interaction of FBXO5 with CDC20. In terms of processing, phosphorylation by CDK2 and subsequently by PLK1 triggers degradation during early mitosis through ubiquitin-mediated proteolysis by the SCF ubiquitin ligase complex containing the F-box protein BTRC. This degradation is necessary for the activation of APC in late mitosis and subsequent mitotic progression. Phosphorylated by RPS6KA2; increases and stabilizes interaction with CDC20. Post-translationally, ubiquitinated by the SCF(BTRC) complex following phosphorylation by PLK1. Undergoes both 'Lys-11' and 'Lys-48'-linked polyubiquitination by APC-FZR1 complex leading to degradation during G1 phase by the proteasome. Degraded through the SCF(BTRC) complex; degradation occurs during oocyte maturation, between germinal vesicle breakdown (GVBD) and meiosis I, and is required for the meiosis I-meiosis II transition. As to expression, expressed in oocytes and granulosa cells. Expressed in proliferating cells compartments in hair follicle and skin epidermis, spermatogonia, and intestinal crypts.

Its subcellular location is the nucleus. The protein resides in the cytoplasm. It is found in the cytoskeleton. It localises to the spindle. Its pathway is protein modification; protein ubiquitination. Regulator of APC activity during mitotic and meiotic cell cycle. During mitotic cell cycle plays a role as both substrate and inhibitor of APC-FZR1 complex. During G1 phase, plays a role as substrate of APC-FZR1 complex E3 ligase. Then switches as an inhibitor of APC-FZR1 complex during S and G2 leading to cell-cycle commitment. As APC inhibitor, prevents the degradation of APC substrates at multiple levels: by interacting with APC and blocking access of APC substrates to the D-box co-receptor, formed by FZR1 and ANAPC10; by suppressing ubiquitin ligation and chain elongation by APC by preventing the UBE2C and UBE2S activities. Plays a role in genome integrity preservation by coordinating DNA replication with mitosis through APC inhibition in interphase to stabilize CCNA2 and GMNN in order to promote mitosis and prevent rereplication and DNA damage-induced cellular senescence. During oocyte maturation, plays a role in meiosis through inactivation of APC-FZR1 complex. Inhibits APC through RPS6KA2 interaction that increases FBXO5 affiniy for CDC20 leading to the metaphase arrest of the second meiotic division before fertilization. Controls entry into the first meiotic division through inactivation of APC-FZR1 complex. Promotes migration and osteogenic differentiation of mesenchymal stem cells. The chain is F-box only protein 5 from Mus musculus (Mouse).